Here is a 760-residue protein sequence, read N- to C-terminus: Xaa-Pro dipeptidyl-peptidase (760 aa).

Active-site charge relay system residues include serine 349, aspartate 469, and histidine 499.

It belongs to the peptidase S15 family. As to quaternary structure, homodimer.

Its subcellular location is the cytoplasm. The catalysed reaction is Hydrolyzes Xaa-Pro-|- bonds to release unblocked, N-terminal dipeptides from substrates including Ala-Pro-|-p-nitroanilide and (sequentially) Tyr-Pro-|-Phe-Pro-|-Gly-Pro-|-Ile.. Removes N-terminal dipeptides sequentially from polypeptides having unsubstituted N-termini provided that the penultimate residue is proline. The chain is Xaa-Pro dipeptidyl-peptidase from Streptococcus pyogenes serotype M3 (strain ATCC BAA-595 / MGAS315).